The chain runs to 439 residues: NAD-dependent malic enzyme 1 (439 aa).

The ACT domain occupies 9 to 84; the sequence is TLMIETPSVP…GIRLHTVSDE (76 aa). Y112 acts as the Proton donor in catalysis. The active-site Proton acceptor is the K167. Residues E209, D210, and D235 each coordinate a divalent metal cation. NAD(+) is bound by residues 268-271, N347, and N373; that span reads LGAA.

It belongs to the malic enzymes family. Mg(2+) serves as cofactor. The cofactor is Mn(2+).

The catalysed reaction is (S)-malate + NAD(+) = pyruvate + CO2 + NADH. It carries out the reaction oxaloacetate + H(+) = pyruvate + CO2. Catalyzes the decarboxylation of malate to pyruvate. Is specific for NAD, cannot use NADP. Can also catalyze the decarboxylation of oxaloacetate. Involved in keeping the ATP levels high. The sequence is that of NAD-dependent malic enzyme 1 from Bacillus subtilis (strain 168).